The sequence spans 23 residues: Acidic phospholipase A2 CHA-E6b (23 aa).

This sequence belongs to the phospholipase A2 family. Group II subfamily. D49 sub-subfamily. The cofactor is Ca(2+). Post-translationally, contains 7 disulfide bonds. In terms of tissue distribution, expressed by the venom gland.

The protein resides in the secreted. The catalysed reaction is a 1,2-diacyl-sn-glycero-3-phosphocholine + H2O = a 1-acyl-sn-glycero-3-phosphocholine + a fatty acid + H(+). Functionally, snake venom phospholipase A2 (PLA2) that shows high lipolytic (1200 umol/mg/min) and weak ADP-induced platelet aggregation activities. Also shows weak anticoagulant activity (IC(50) of about 1.0 uM). PLA2 catalyzes the calcium-dependent hydrolysis of the 2-acyl groups in 3-sn-phosphoglycerides. The chain is Acidic phospholipase A2 CHA-E6b from Crotalus horridus (Timber rattlesnake).